Consider the following 486-residue polypeptide: Shugoshin-1 (486 aa).

The stretch at 71–154 forms a coiled coil; the sequence is IEVSRVELQK…QNRAKILEKK (84 aa). 6 disordered regions span residues 137-163, 187-209, 222-251, 323-346, 382-403, and 418-467; these read MSKT…CAPT, YTSC…RKSE, HSCR…ARLN, AGSS…PRKS, PIQH…DPGP, and TVAP…SRRA. Over residues 331-346 the composition is skewed to basic and acidic residues; it reads EAHKFDIEDPEPPRKS. Residues 387–396 are compositionally biased toward basic residues; it reads QKRKLSRRKS. The segment covering 423–433 has biased composition (polar residues); that stretch reads APSSSNALIEQ.

The protein belongs to the shugoshin family. As to expression, highly expressed in roots. Expressed in panicles. Expressed at low levels in leaves.

It is found in the nucleus. The protein resides in the nucleolus. The protein localises to the chromosome. Its subcellular location is the centromere. Plays a central role in chromosome cohesion during meiosis I by preventing premature dissociation of cohesin complex from centromeres after prophase, when most of cohesin complex dissociates from chromosomes arms. Required for the timely assembly and maintenance of synaptonemal complex (SC) during early prophase I. Required for maintenance of centromeric cohesion before prophase II and correct segregation of chromatids during meiosis II. Has apparently no function in mitosis. This is Shugoshin-1 from Oryza sativa subsp. japonica (Rice).